The sequence spans 612 residues: Dihydroxy-acid dehydratase (612 aa).

A Mg(2+)-binding site is contributed by D81. C122 contacts [2Fe-2S] cluster. Mg(2+) contacts are provided by D123 and K124. Residue K124 is modified to N6-carboxylysine. Residue C195 coordinates [2Fe-2S] cluster. E491 provides a ligand contact to Mg(2+). The active-site Proton acceptor is S517.

It belongs to the IlvD/Edd family. As to quaternary structure, homodimer. Requires [2Fe-2S] cluster as cofactor. It depends on Mg(2+) as a cofactor.

The enzyme catalyses (2R)-2,3-dihydroxy-3-methylbutanoate = 3-methyl-2-oxobutanoate + H2O. The catalysed reaction is (2R,3R)-2,3-dihydroxy-3-methylpentanoate = (S)-3-methyl-2-oxopentanoate + H2O. Its pathway is amino-acid biosynthesis; L-isoleucine biosynthesis; L-isoleucine from 2-oxobutanoate: step 3/4. The protein operates within amino-acid biosynthesis; L-valine biosynthesis; L-valine from pyruvate: step 3/4. Functions in the biosynthesis of branched-chain amino acids. Catalyzes the dehydration of (2R,3R)-2,3-dihydroxy-3-methylpentanoate (2,3-dihydroxy-3-methylvalerate) into 2-oxo-3-methylpentanoate (2-oxo-3-methylvalerate) and of (2R)-2,3-dihydroxy-3-methylbutanoate (2,3-dihydroxyisovalerate) into 2-oxo-3-methylbutanoate (2-oxoisovalerate), the penultimate precursor to L-isoleucine and L-valine, respectively. In Rhizobium johnstonii (strain DSM 114642 / LMG 32736 / 3841) (Rhizobium leguminosarum bv. viciae), this protein is Dihydroxy-acid dehydratase.